A 527-amino-acid polypeptide reads, in one-letter code: MIETDRETFTALADDGPAIVRVAADLDIDVAPLTAYDALVADADDHAFLLESAEKTPASDPDGAFTPDTTTEETRHARYSFVGYDPAAVVTVDPDDTTITRLRDDPITDLLDAPDHATGDVLDRLRSVMPAVPRRNIPTEDRQLLDGGLVGFLAYDAVYDLWLDEVGVERPPTPLPDAEFAVTTRTLVFDRATDSVSLVCTPVADADTATDVYDALEAEAKRVQAVLRDATAPATAGIEVTTERAGDRDAYTDAVETAATAVRDGEVYQAVVSRTRELDGDIDPRALYDALRAVNPSPYMFLLAHGDHTVVGASPETLVAVHDDTVVTNPIAGTCQRGASPVADRRLAGEMLADEKERAEHTMLVDLARNDVRRVSAPGTVSVPEFMRVLKYSHVQHIESTVTGTLAADADAFDATRAAFPAGTLSGAPKVRAMEHIDAIEATPRGIYGGGVGYFSWTGDAELAITIRSGTITHTGDEDTLTVRAGAGVVADSDPDAEYEETEAKMDGVLAAVDRLRTTDDGEAVHR.

Residue Ser52 coordinates L-tryptophan. A disordered region spans residues Ala53–Glu72. Pro298–Met300 lines the L-tryptophan pocket. Residue Gly333–Thr334 participates in chorismate binding. Residue Glu360 coordinates Mg(2+). Chorismate is bound by residues Tyr448, Arg468, Gly486–Gly488, and Gly488. Glu501 contacts Mg(2+).

The protein belongs to the anthranilate synthase component I family. In terms of assembly, tetramer of two components I and two components II. Requires Mg(2+) as cofactor.

The catalysed reaction is chorismate + L-glutamine = anthranilate + pyruvate + L-glutamate + H(+). The protein operates within amino-acid biosynthesis; L-tryptophan biosynthesis; L-tryptophan from chorismate: step 1/5. The chain is Anthranilate synthase component 1 1 (trpE1) from Halobacterium salinarum (strain ATCC 700922 / JCM 11081 / NRC-1) (Halobacterium halobium).